A 591-amino-acid polypeptide reads, in one-letter code: DEAD-box ATP-dependent RNA helicase 35 (591 aa).

The Q motif signature appears at 146 to 174 (KNFKDMKFPRPVLDTLKEKGIVQPTPIQV). Positions 177 to 361 (LPVILAGRDM…RSALVKPVTV (185 aa)) constitute a Helicase ATP-binding domain. 190-197 (AFTGSGKT) contacts ATP. The DEAD box signature appears at 309-312 (DEAD). The Helicase C-terminal domain occupies 372 to 532 (DVIQEVEYVK…RIPPVLAELN (161 aa)). The CCHC-type zinc-finger motif lies at 548–565 (KGCAYCGGLGHRIRDCPK).

This sequence belongs to the DEAD box helicase family. DDX41 subfamily.

It catalyses the reaction ATP + H2O = ADP + phosphate + H(+). This is DEAD-box ATP-dependent RNA helicase 35 (RH35) from Arabidopsis thaliana (Mouse-ear cress).